A 334-amino-acid polypeptide reads, in one-letter code: Peroxidase 65 (334 aa).

An N-terminal signal peptide occupies residues 1 to 28; sequence MSNMQFSRGFNPFVILFCLAVVAPIISA. Disulfide bonds link Cys-42–Cys-123, Cys-75–Cys-80, Cys-129–Cys-326, and Cys-208–Cys-236. The active-site Proton acceptor is His-73. Residues Asp-74, Gly-79, Asp-81, and Ser-83 each contribute to the Ca(2+) site. Pro-171 serves as a coordination point for substrate. Residue Asn-174 is glycosylated (N-linked (GlcNAc...) asparagine). Residue His-201 participates in heme b binding. Residue Thr-202 participates in Ca(2+) binding. N-linked (GlcNAc...) asparagine glycosylation is present at Asn-238. Positions 250, 253, and 258 each coordinate Ca(2+). Residues Asn-282 and Asn-294 are each glycosylated (N-linked (GlcNAc...) asparagine).

It belongs to the peroxidase family. Classical plant (class III) peroxidase subfamily. The cofactor is heme b. Ca(2+) is required as a cofactor.

It is found in the secreted. It catalyses the reaction 2 a phenolic donor + H2O2 = 2 a phenolic radical donor + 2 H2O. In terms of biological role, removal of H(2)O(2), oxidation of toxic reductants, biosynthesis and degradation of lignin, suberization, auxin catabolism, response to environmental stresses such as wounding, pathogen attack and oxidative stress. These functions might be dependent on each isozyme/isoform in each plant tissue. The polypeptide is Peroxidase 65 (PER65) (Arabidopsis thaliana (Mouse-ear cress)).